The following is a 160-amino-acid chain: uncharacterized protein (160 aa).

This is an uncharacterized protein from Mycobacterium tuberculosis (strain CDC 1551 / Oshkosh).